Consider the following 1000-residue polypeptide: MLEARVDMLSSNMIISGPAADLGAKEASRPWKKQLNSVPNSGPSARARAQPQPLSIKDKISKWEGKKEPPASDPARQTDGQEDHLPSCKVERRGSELTRTKNGMRLETERLQNDSRARTVCQDTEQLPGPRPIDGQPELSQHRGRELKPSDLRFQSDHLSVLRQVKRLEKALKDGSAGLDPQMPGTCYSPHCLPDKTEEDLPSLESHEKGGVLAAGRRAHHLEVREPGPEISEDWKGQESVYRGSRWYPPKPFINPVPKPRRTFKHAGEGDKDVSPGISFKKEKRNLPPLPSLPPPPPPLPSSPPPTSVNRRLWTGRQRPSADHRKSYEFEDLLQSSSENSRVDWYAQTKLGLTRTLSEENVYEDILDPPMKENPYEDVELHGRCLGKKCVLTFPASPTSSIPDTSTKQSLSKSAFFRQNSERRNLKLLDTRKLSRDGAGSPLRTSPPSTPSSPDDTFFNLGDLQNGRKKKKIPRLVLRINAIYEARRGKKRVKRLSQSTESNSGKVTDENSESDSDTEEKLKAHSQRLVNVKSRLKQAPRYSSLDRDLIEYQERQLFEYFVVVSLHKKQAGAAYVPELTQQFPLKLEKSFKFMREAEDQLKAIPQFCFPDAKDWAPVQEFTSETFSFVLTGEDGSRRFGYCRRLLPGGKGKRLPEVYCIVSRLGCFSLFSKILDEVEKRRGISPALVQPLMRSVMEAPFPALGKTIIVKNFLPGSGTEVIELCRPLDSRLEHVDFESLFSSLSVRHLVSVFASLLLERRVIFIADKLSTLSKCCHAMVALIYPFSWQHTYIPVLPPAMIDIVCSPTPFLIGLLSSSLPLLRELPLEEVLVVDLINDRFLRQMEDEDSILPRKLQVALEHILEQRNDLACDQDGGPLDCVHGPESSSLSEVVSEAFVRFFVEIVGHYPLFLTSGEERSLQREAFRKAVSSKSLRRFLEVFMETQTFRGFIQERELRRQDAKGLFEVRAQEYLETLPSGEHSGVNKFLKGLGNKMKFLHKK.

Disordered stretches follow at residues 1–155 (MLEA…LRFQ), 174–328 (DGSA…RKSY), 427–464 (KLLD…LGDL), and 491–525 (KRVK…LKAH). The span at 34-43 (QLNSVPNSGP) shows a compositional bias: polar residues. Composition is skewed to basic and acidic residues over residues 56–70 (IKDK…KEPP), 79–117 (DGQE…DSRA), 140–155 (SQHR…LRFQ), and 221–237 (HLEV…DWKG). Pro residues-rich tracts occupy residues 249-258 (PPKPFINPVP) and 288-307 (PPLP…PPPT). Residues 427–436 (KLLDTRKLSR) are compositionally biased toward basic and acidic residues. Residues 496–506 (LSQSTESNSGK) are compositionally biased toward polar residues. Ser-544 carries the post-translational modification Phosphoserine. Residues 559-708 (EYFVVVSLHK…PFPALGKTII (150 aa)) enclose the uDENN domain. The 134-residue stretch at 730 to 863 (RLEHVDFESL…LQVALEHILE (134 aa)) folds into the cDENN domain. The dDENN domain occupies 865–960 (RNDLACDQDG…QERELRRQDA (96 aa)).

It is found in the cytoplasm. Its subcellular location is the cytoskeleton. In terms of biological role, guanine nucleotide exchange factor (GEF) which may activate RAB9A and RAB9B. Promotes the exchange of GDP to GTP, converting inactive GDP-bound Rab proteins into their active GTP-bound form. May play a role in late endosomes back to trans-Golgi network/TGN transport. The chain is DENN domain-containing protein 2A (Dennd2a) from Mus musculus (Mouse).